We begin with the raw amino-acid sequence, 480 residues long: RNA-binding protein 42 (480 aa).

Residues 1-30 form a disordered region; that stretch reads MAGAGPAPGLPGAGGPVVPGPGAGIPGKSG. Ala-2 is modified (N-acetylalanine). Residues 11–27 are compositionally biased toward gly residues; it reads PGAGGPVVPGPGAGIPG. Ser-135 carries the post-translational modification Phosphoserine. Arg-153, Arg-158, Arg-168, and Arg-181 each carry asymmetric dimethylarginine. Positions 236-480 are necessary for interaction with HNRNPK; that stretch reads ELGLGLGLGL…QKEKKKLGLR (245 aa). The tract at residues 319–356 is disordered; the sequence is SLRPRPRPPRPEPPPGLMALEVPEPLGEDKKKGKPEKL. Residues 345 to 356 show a composition bias toward basic and acidic residues; it reads GEDKKKGKPEKL. Residues 381-459 form the RRM domain; that stretch reads FRIFCGDLGN…RPIKLRKSMW (79 aa).

It belongs to the RRM RBM42 family. In terms of assembly, interacts with HNRNPK.

Its subcellular location is the nucleus. It is found in the cytoplasm. Binds (via the RRM domain) to the 3'-untranslated region (UTR) of CDKN1A mRNA. The sequence is that of RNA-binding protein 42 (RBM42) from Homo sapiens (Human).